The primary structure comprises 646 residues: Long-chain fatty acid transport protein 1 (646 aa).

The Extracellular segment spans residues 1-13 (MRAPGAGAASVVS). A helical membrane pass occupies residues 14-34 (LALLWLLGLPWTWSAAAALGV). Topologically, residues 35–646 (YVGSGGWRFL…TRICSGAFAL (612 aa)) are cytoplasmic. The interval 191-475 (EVSGHLGKSL…YVSESATSKK (285 aa)) is sufficient for oligomerization. 246–257 (YIYTSGTTGLPK) is an AMP binding site.

The protein belongs to the ATP-dependent AMP-binding enzyme family. As to quaternary structure, self-associates. May function as a homodimer. Interacts with EPRS1; mediates the translocation of SLC27A1 from the cytoplasm to the plasma membrane thereby increasing the uptake of long-chain fatty acids. Interacts with DGAT2 and this interaction is enhanced in the presence of ZFYVE1. In terms of tissue distribution, highest levels of expression are detected in muscle and adipose tissue small, intermediate levels in small intestine, and barely detectable in liver. Expressed in brain gray matter.

The protein localises to the cell membrane. It localises to the endomembrane system. It is found in the cytoplasm. It carries out the reaction a fatty acid(in) = a fatty acid(out). The catalysed reaction is (9Z)-octadecenoate(out) = (9Z)-octadecenoate(in). It catalyses the reaction hexadecanoate(out) = hexadecanoate(in). The enzyme catalyses (9Z,12Z)-octadecadienoate(out) = (9Z,12Z)-octadecadienoate(in). It carries out the reaction (5Z,8Z,11Z,14Z)-eicosatetraenoate(out) = (5Z,8Z,11Z,14Z)-eicosatetraenoate(in). The catalysed reaction is a long-chain fatty acid + ATP + CoA = a long-chain fatty acyl-CoA + AMP + diphosphate. It catalyses the reaction (5Z,8Z,11Z,14Z)-eicosatetraenoate + ATP + CoA = (5Z,8Z,11Z,14Z)-eicosatetraenoyl-CoA + AMP + diphosphate. The enzyme catalyses a very long-chain fatty acid + ATP + CoA = a very long-chain fatty acyl-CoA + AMP + diphosphate. It carries out the reaction tetracosanoate + ATP + CoA = tetracosanoyl-CoA + AMP + diphosphate. With respect to regulation, inhibited by Triacsin C. In terms of biological role, mediates the import of long-chain fatty acids (LCFA) into the cell by facilitating their transport at the plasma membrane. Also functions as an acyl-CoA ligase catalyzing the ATP-dependent formation of fatty acyl-CoA using LCFA and very-long-chain fatty acids (VLCFA) as substrates, which prevents fatty acid efflux from cells and might drive more fatty acid uptake. May act directly as a bona fide transporter, or alternatively, in a cytoplasmic or membrane-associated multimeric protein complex to trap and draw fatty acids towards accumulation. Plays a pivotal role in regulating available LCFA substrates from exogenous sources in tissues undergoing high levels of beta-oxidation or triglyceride synthesis. May be involved in regulation of cholesterol metabolism. Probably involved in fatty acid transport across the blood barrier. This is Long-chain fatty acid transport protein 1 from Homo sapiens (Human).